Consider the following 561-residue polypeptide: Putative transport protein YbjL (561 aa).

The next 5 helical transmembrane spans lie at 8 to 28 (LLNGNYILLLFVVLALGLCLG), 32 to 52 (LGSIQLGNSIGVLVVSLLLGQ), 66 to 86 (FMLFIFCVGVEAGPNFFSIFF), 94 to 114 (MLALVMVGSALLIALGLGKLF), and 158 to 178 (NLSLGYALTYLIGLVSLIVGA). 2 consecutive RCK C-terminal domains span residues 200 to 288 (RGLD…SFRN) and 292 to 373 (VFDR…RIGF). The next 5 helical transmembrane spans lie at 383–403 (LLAFCAFFIIGLMIGMITFQF), 406–426 (FSFGIGNAAGLLFAGIMLGFL), 447–467 (FGLMVFMAGVGLSAGSGISNG), 475–495 (MLIAGLVVSLAPVVICFLFGA), and 540–560 (AIANVLLTLAGTLIVIIWPGL).

The protein belongs to the AAE transporter (TC 2.A.81) family. YbjL subfamily.

It localises to the cell membrane. The chain is Putative transport protein YbjL from Salmonella arizonae (strain ATCC BAA-731 / CDC346-86 / RSK2980).